The chain runs to 545 residues: Chaperonin GroEL (545 aa).

Residues 30–33 (TLGP), Lys-51, 87–91 (DGTTT), Gly-415, 479–481 (NAA), and Asp-495 contribute to the ATP site. Positions 526 to 545 (KEDKPDLGGAGGMGGMGGMM) are disordered. Residues 533–545 (GGAGGMGGMGGMM) are compositionally biased toward gly residues.

It belongs to the chaperonin (HSP60) family. As to quaternary structure, forms a cylinder of 14 subunits composed of two heptameric rings stacked back-to-back. Interacts with the co-chaperonin GroES.

It localises to the cytoplasm. The catalysed reaction is ATP + H2O + a folded polypeptide = ADP + phosphate + an unfolded polypeptide.. Functionally, together with its co-chaperonin GroES, plays an essential role in assisting protein folding. The GroEL-GroES system forms a nano-cage that allows encapsulation of the non-native substrate proteins and provides a physical environment optimized to promote and accelerate protein folding. The sequence is that of Chaperonin GroEL from Sodalis glossinidius.